The primary structure comprises 273 residues: MTTVAASTRPQRAEGRGHLAAKLFDGRTRIRELYQEGAAKIRLPDTFDASMEAVIINTAGGLTGGDRMDWSVDAGAGTRIDVTTQACEKIYKASAGTAEVTTSIEVGAQARVDWLPQETILFDRAALSRRLDVDLDEDSEFLAVEAVLLGRKAMGETVETGLFRDRWRIRRSGRLIHAEELRLSDGVAALAARQAVLGGQVAFATLLYAGPLSEAYLGKVRPLVEGSMGGASAWDGKLVVRLAAADGFSLRKILIPVISALRNGAPVPKVWNL.

This sequence belongs to the UreD family. As to quaternary structure, ureD, UreF and UreG form a complex that acts as a GTP-hydrolysis-dependent molecular chaperone, activating the urease apoprotein by helping to assemble the nickel containing metallocenter of UreC. The UreE protein probably delivers the nickel.

It localises to the cytoplasm. Its function is as follows. Required for maturation of urease via the functional incorporation of the urease nickel metallocenter. The protein is Urease accessory protein UreD of Rhizobium leguminosarum bv. viciae.